Reading from the N-terminus, the 207-residue chain is ATP-dependent dethiobiotin synthetase BioD (207 aa).

An ATP-binding site is contributed by 11-16 (DVGKTF). Residue Thr15 coordinates Mg(2+). Lys31 is an active-site residue. Ser35 contributes to the substrate binding site. Residues Asp42, 95-98 (ETSG), and 155-156 (NQ) contribute to the ATP site. Asp42 and Glu95 together coordinate Mg(2+).

Belongs to the dethiobiotin synthetase family. Homodimer. Mg(2+) is required as a cofactor.

It localises to the cytoplasm. The enzyme catalyses (7R,8S)-7,8-diammoniononanoate + CO2 + ATP = (4R,5S)-dethiobiotin + ADP + phosphate + 3 H(+). The protein operates within cofactor biosynthesis; biotin biosynthesis; biotin from 7,8-diaminononanoate: step 1/2. Catalyzes a mechanistically unusual reaction, the ATP-dependent insertion of CO2 between the N7 and N8 nitrogen atoms of 7,8-diaminopelargonic acid (DAPA, also called 7,8-diammoniononanoate) to form a ureido ring. This chain is ATP-dependent dethiobiotin synthetase BioD, found in Chlamydia abortus (strain DSM 27085 / S26/3) (Chlamydophila abortus).